The sequence spans 150 residues: Dual specificity protein phosphatase 23 (150 aa).

One can recognise a Tyrosine-protein phosphatase domain in the interval 7-150; the sequence is NFSWVLPGRL…AVFQFYQRTK (144 aa). The Phosphocysteine intermediate role is filled by Cys95.

The protein belongs to the protein-tyrosine phosphatase family. Non-receptor class dual specificity subfamily. In terms of tissue distribution, widely expressed. Highly expressed in spleen, prostate, colon, adrenal gland, mammary gland, thyroid and trachea. Expressed at lower level in uterus, small intestine, bladder, bone marrow, brain, spinal cord and stomach.

The protein localises to the cytoplasm. The protein resides in the cytosol. It localises to the nucleus. It carries out the reaction O-phospho-L-tyrosyl-[protein] + H2O = L-tyrosyl-[protein] + phosphate. The enzyme catalyses O-phospho-L-seryl-[protein] + H2O = L-seryl-[protein] + phosphate. It catalyses the reaction O-phospho-L-threonyl-[protein] + H2O = L-threonyl-[protein] + phosphate. Its function is as follows. Protein phosphatase that mediates dephosphorylation of proteins phosphorylated on Tyr and Ser/Thr residues. In vitro, it can dephosphorylate p44-ERK1 (MAPK3) but not p54 SAPK-beta (MAPK10) in vitro. Able to enhance activation of JNK and p38 (MAPK14). The polypeptide is Dual specificity protein phosphatase 23 (DUSP23) (Homo sapiens (Human)).